We begin with the raw amino-acid sequence, 175 residues long: Large ribosomal subunit protein uL30 (175 aa).

The protein belongs to the universal ribosomal protein uL30 family. As to quaternary structure, part of the 50S ribosomal subunit.

The chain is Large ribosomal subunit protein uL30 from Pyrobaculum neutrophilum (strain DSM 2338 / JCM 9278 / NBRC 100436 / V24Sta) (Thermoproteus neutrophilus).